The chain runs to 208 residues: Apoptosis inhibitor 193R (208 aa).

The segment at 1 to 25 is disordered; that stretch reads MDTCGIYNSDNEEFSQENDGENDGG. Residues 10-23 show a composition bias toward acidic residues; it reads DNEEFSQENDGEND. The stretch at 37 to 108 is one BIR repeat; that stretch reads YDERLNSFQN…QDLKINCLFV (72 aa). Cys74, Cys77, His94, and Cys105 together coordinate Zn(2+). 3 consecutive repeat copies span residues 134–139, 140–145, and 146–151. Residues 134–151 are 3 X 6 AA tandem repeats; sequence NQDLDHNQDLDHNQDLDQ. The RING-type zinc finger occupies 163–197; sequence CKICFTNKITKVLIPCGHSSCYECVFKLQTCPICK.

The protein belongs to the IIV-6 193R family.

Its function is as follows. Plays a role early in infection by preventing host cell apoptosis. This is Apoptosis inhibitor 193R from Invertebrate iridescent virus 6 (IIV-6).